The chain runs to 143 residues: Large ribosomal subunit protein uL15 (143 aa).

A disordered region spans residues 1–54; the sequence is MQLNSIKPAPGAKHPKRRVGRGIGSGLGKTAGRGHKGQKSRAGGFHKVGFEGGQ. A compositionally biased stretch (gly residues) spans 21–31; that stretch reads RGIGSGLGKTA.

Belongs to the universal ribosomal protein uL15 family. Part of the 50S ribosomal subunit.

Its function is as follows. Binds to the 23S rRNA. The sequence is that of Large ribosomal subunit protein uL15 from Nitrosospira multiformis (strain ATCC 25196 / NCIMB 11849 / C 71).